A 449-amino-acid chain; its full sequence is CCAAT/enhancer-binding protein (449 aa).

Disordered stretches follow at residues His-211–Glu-233, Gly-276–Gln-302, and Ser-334–Val-386. 3 stretches are compositionally biased toward low complexity: residues Asn-215 to Ser-229, Asn-280 to Ser-301, and Gln-339 to Gln-349. The span at Lys-357 to Arg-368 shows a compositional bias: basic and acidic residues. The bZIP domain occupies Thr-363 to Leu-426. A basic motif region spans residues Arg-367–Lys-396. A leucine-zipper region spans residues Leu-398–Leu-405.

It belongs to the bZIP family. C/EBP subfamily. As to quaternary structure, binds DNA as a dimer and can form stable heterodimers. Interacts with trbl. In terms of processing, ubiquitination/deubiquitination regulates border cell migration. Ubiquitination is stimulated by trbl, which leads to proteasomal degradation and inhibits border cell migration. Deubiquitination by Usp47, leads to its stabilization and promotes border cell migration.

The protein resides in the nucleus. Its function is as follows. Required for the expression of gene products mediating border cell migration. Among the DNA sequences that this protein binds with high affinity is a conserved site within the promoter of its gene. The chain is CCAAT/enhancer-binding protein (slbo) from Drosophila melanogaster (Fruit fly).